We begin with the raw amino-acid sequence, 171 residues long: Adenine phosphoribosyltransferase (171 aa).

Belongs to the purine/pyrimidine phosphoribosyltransferase family. In terms of assembly, homodimer.

Its subcellular location is the cytoplasm. The catalysed reaction is AMP + diphosphate = 5-phospho-alpha-D-ribose 1-diphosphate + adenine. The protein operates within purine metabolism; AMP biosynthesis via salvage pathway; AMP from adenine: step 1/1. Catalyzes a salvage reaction resulting in the formation of AMP, that is energically less costly than de novo synthesis. The protein is Adenine phosphoribosyltransferase of Shouchella clausii (strain KSM-K16) (Alkalihalobacillus clausii).